Reading from the N-terminus, the 512-residue chain is Putative ribose/galactose/methyl galactoside import ATP-binding protein 1 (512 aa).

2 ABC transporter domains span residues 14 to 251 and 262 to 507; these read IALT…VGRQ and TSAN…TQRE. Residue 46-53 coordinates ATP; the sequence is GENGAGKS.

The protein belongs to the ABC transporter superfamily. Carbohydrate importer 2 (CUT2) (TC 3.A.1.2) family.

It localises to the cell inner membrane. The enzyme catalyses D-ribose(out) + ATP + H2O = D-ribose(in) + ADP + phosphate + H(+). The catalysed reaction is D-galactose(out) + ATP + H2O = D-galactose(in) + ADP + phosphate + H(+). Its function is as follows. Part of an ABC transporter complex involved in carbohydrate import. Could be involved in ribose, galactose and/or methyl galactoside import. Responsible for energy coupling to the transport system. This Burkholderia lata (strain ATCC 17760 / DSM 23089 / LMG 22485 / NCIMB 9086 / R18194 / 383) protein is Putative ribose/galactose/methyl galactoside import ATP-binding protein 1.